The chain runs to 332 residues: Cell division protein ZipA (332 aa).

The Periplasmic segment spans residues 1–6; that stretch reads MMQDLR. The chain crosses the membrane as a helical span at residues 7–27; that stretch reads LILIVVGAIAIIALLLHGLWT. At 28–332 the chain is on the cytoplasmic side; it reads SRKERSSLFR…RLREVLENNA (305 aa). Basic and acidic residues-rich tracts occupy residues 34–51 and 61–72; these read SLFRDRPAKRSKKEREQS and GEVRVRSAHPED. Residues 34–184 are disordered; that stretch reads SLFRDRPAKR…PAVAHEPQPA (151 aa). A compositionally biased stretch (low complexity) spans 98–107; sequence PAPRAVQPAA. Over residues 121-136 the composition is skewed to acidic residues; sequence DDILLDNYAQEEDDEP. Positions 155 to 171 are enriched in low complexity; it reads PAAEPAFHAEPAHQPQP.

This sequence belongs to the ZipA family. As to quaternary structure, interacts with FtsZ via their C-terminal domains.

Its subcellular location is the cell inner membrane. Essential cell division protein that stabilizes the FtsZ protofilaments by cross-linking them and that serves as a cytoplasmic membrane anchor for the Z ring. Also required for the recruitment to the septal ring of downstream cell division proteins. The sequence is that of Cell division protein ZipA from Serratia proteamaculans (strain 568).